We begin with the raw amino-acid sequence, 490 residues long: Probable cytosol aminopeptidase (490 aa).

Lys258 and Asp263 together coordinate Mn(2+). Residue Lys270 is part of the active site. The Mn(2+) site is built by Asp282, Asp341, and Glu343. Residue Arg345 is part of the active site.

Belongs to the peptidase M17 family. It depends on Mn(2+) as a cofactor.

The protein resides in the cytoplasm. The catalysed reaction is Release of an N-terminal amino acid, Xaa-|-Yaa-, in which Xaa is preferably Leu, but may be other amino acids including Pro although not Arg or Lys, and Yaa may be Pro. Amino acid amides and methyl esters are also readily hydrolyzed, but rates on arylamides are exceedingly low.. The enzyme catalyses Release of an N-terminal amino acid, preferentially leucine, but not glutamic or aspartic acids.. Presumably involved in the processing and regular turnover of intracellular proteins. Catalyzes the removal of unsubstituted N-terminal amino acids from various peptides. This chain is Probable cytosol aminopeptidase, found in Microcystis aeruginosa (strain NIES-843 / IAM M-2473).